Consider the following 341-residue polypeptide: uncharacterized protein (341 aa).

Residues Ser-111, Asp-247, and His-275 contribute to the active site.

This sequence belongs to the DmpD/TodF/XylF esterase family.

This is an uncharacterized protein from Mycobacterium bovis (strain ATCC BAA-935 / AF2122/97).